Here is a 470-residue protein sequence, read N- to C-terminus: 3-isopropylmalate dehydratase large subunit (470 aa).

The interval 50-121 is disordered; sequence NVARGCQHRH…PCGRPGAGRH (72 aa). Positions 349, 409, and 412 each coordinate [4Fe-4S] cluster.

Belongs to the aconitase/IPM isomerase family. LeuC type 1 subfamily. Heterodimer of LeuC and LeuD. [4Fe-4S] cluster serves as cofactor.

The catalysed reaction is (2R,3S)-3-isopropylmalate = (2S)-2-isopropylmalate. It participates in amino-acid biosynthesis; L-leucine biosynthesis; L-leucine from 3-methyl-2-oxobutanoate: step 2/4. Catalyzes the isomerization between 2-isopropylmalate and 3-isopropylmalate, via the formation of 2-isopropylmaleate. The polypeptide is 3-isopropylmalate dehydratase large subunit (Azotobacter vinelandii).